A 377-amino-acid chain; its full sequence is D-alanine--D-alanine ligase (377 aa).

An ATP-grasp domain is found at 140–349; the sequence is KELLTVNGIR…NAKLVDMLID (210 aa). 170 to 225 provides a ligand contact to ATP; it reads VAELGNIVFVKAANQGSSVGISRVTNAEEYTEALSDSFQYDYKVLIEEAVNGAREL. Mg(2+) contacts are provided by Asp-303, Glu-316, and Asn-318.

The protein belongs to the D-alanine--D-alanine ligase family. The cofactor is Mg(2+). Mn(2+) serves as cofactor.

The protein localises to the cytoplasm. It catalyses the reaction 2 D-alanine + ATP = D-alanyl-D-alanine + ADP + phosphate + H(+). It functions in the pathway cell wall biogenesis; peptidoglycan biosynthesis. Functionally, cell wall formation. In Leuconostoc mesenteroides subsp. mesenteroides (strain ATCC 8293 / DSM 20343 / BCRC 11652 / CCM 1803 / JCM 6124 / NCDO 523 / NBRC 100496 / NCIMB 8023 / NCTC 12954 / NRRL B-1118 / 37Y), this protein is D-alanine--D-alanine ligase.